Reading from the N-terminus, the 549-residue chain is Probable glucomannan 4-beta-mannosyltransferase 4 (549 aa).

Residues 35-55 (VAPVLQFAVWACMAMSVMLVL) traverse the membrane as a helical segment. D151 is an active-site residue. Substrate is bound by residues D210 and D212. The active site involves D304. The next 4 helical transmembrane spans lie at 383 to 403 (VVAP…SVMV), 406 to 426 (VSIP…MNAI), 497 to 517 (IYIP…YDLV), and 523 to 543 (YYLY…GFAG).

This sequence belongs to the glycosyltransferase 2 family. Plant cellulose synthase-like A subfamily.

It localises to the golgi apparatus membrane. The enzyme catalyses GDP-mannose + (glucomannan)n = GDP + (glucomannan)n+1.. Functionally, probable mannan synthase which consists of a 4-beta-mannosyltransferase activity on mannan using GDP-mannose. The beta-1,4-mannan product is the backbone for galactomannan synthesis by galactomannan galactosyltransferase. Galactomannan is a noncellulosic polysaccharides of plant cell wall. This chain is Probable glucomannan 4-beta-mannosyltransferase 4, found in Oryza sativa subsp. japonica (Rice).